The primary structure comprises 508 residues: Steroid 17-alpha-hydroxylase/17,20 lyase (508 aa).

Heme is bound at residue cysteine 442.

Belongs to the cytochrome P450 family. Heme is required as a cofactor.

The protein localises to the endoplasmic reticulum membrane. It is found in the microsome membrane. It carries out the reaction a C21-steroid + reduced [NADPH--hemoprotein reductase] + O2 = a 17alpha-hydroxy-C21-steroid + oxidized [NADPH--hemoprotein reductase] + H2O + H(+). The enzyme catalyses progesterone + reduced [NADPH--hemoprotein reductase] + O2 = 17alpha-hydroxyprogesterone + oxidized [NADPH--hemoprotein reductase] + H2O + H(+). It catalyses the reaction pregnenolone + reduced [NADPH--hemoprotein reductase] + O2 = 17alpha-hydroxypregnenolone + oxidized [NADPH--hemoprotein reductase] + H2O + H(+). The catalysed reaction is 17alpha-hydroxyprogesterone + reduced [NADPH--hemoprotein reductase] + O2 = androst-4-ene-3,17-dione + acetate + oxidized [NADPH--hemoprotein reductase] + H2O + 2 H(+). It carries out the reaction 17alpha-hydroxyprogesterone + reduced [NADPH--hemoprotein reductase] + O2 = 16alpha,17alpha-dihydroxyprogesterone + oxidized [NADPH--hemoprotein reductase] + H2O + H(+). The enzyme catalyses 16alpha,17alpha-dihydroxyprogesterone + reduced [NADPH--hemoprotein reductase] + O2 = 6beta,16alpha,17alpha-trihydroxyprogesterone + oxidized [NADPH--hemoprotein reductase] + H2O + H(+). It catalyses the reaction 17alpha-hydroxypregnenolone + reduced [NADPH--hemoprotein reductase] + O2 = 3beta-hydroxyandrost-5-en-17-one + acetate + oxidized [NADPH--hemoprotein reductase] + H2O + 2 H(+). The catalysed reaction is 16alpha,17alpha-dihydroxypregnenolone + reduced [NADPH--hemoprotein reductase] + O2 = 3beta,16alpha-dihydroxy-androst-5-en-17-one + acetate + oxidized [NADPH--hemoprotein reductase] + H2O + 2 H(+). It carries out the reaction 3beta-hydroxyandrost-5-en-17-one + reduced [NADPH--hemoprotein reductase] + O2 = 3beta,16alpha-dihydroxy-androst-5-en-17-one + oxidized [NADPH--hemoprotein reductase] + H2O + H(+). The enzyme catalyses androst-4-ene-3,17-dione + reduced [NADPH--hemoprotein reductase] + O2 = 16alpha-hydroxyandrost-4-ene-3,17-dione + oxidized [NADPH--hemoprotein reductase] + H2O + H(+). It participates in steroid hormone biosynthesis. It functions in the pathway steroid biosynthesis; glucocorticoid biosynthesis. Regulated predominantly by intracellular cAMP levels. The 17,20-lyase activity is stimulated by cytochrome b5, which acts as an allosteric effector increasing the Vmax of the lyase activity. A cytochrome P450 monooxygenase involved in corticoid and androgen biosynthesis. Catalyzes 17-alpha hydroxylation of C21 steroids, which is common for both pathways. A second oxidative step, required only for androgen synthesis, involves an acyl-carbon cleavage. The 17-alpha hydroxy intermediates, as part of adrenal glucocorticoids biosynthesis pathway, are precursors of cortisol. Hydroxylates steroid hormones, pregnenolone and progesterone to form 17-alpha hydroxy metabolites, followed by the cleavage of the C17-C20 bond to form C19 steroids, dehydroepiandrosterone (DHEA) and androstenedione. Has 16-alpha hydroxylase activity. Catalyzes 16-alpha hydroxylation of 17-alpha hydroxy pregnenolone, followed by the cleavage of the C17-C20 bond to form 16-alpha-hydroxy DHEA. Also 16-alpha hydroxylates androgens, relevant for estriol synthesis. Mechanistically, uses molecular oxygen inserting one oxygen atom into a substrate, and reducing the second into a water molecule, with two electrons provided by NADPH via cytochrome P450 reductase (CPR; NADPH-ferrihemoprotein reductase). The sequence is that of Steroid 17-alpha-hydroxylase/17,20 lyase (CYP17A1) from Equus caballus (Horse).